A 947-amino-acid polypeptide reads, in one-letter code: MNPKKNNNTFLSYFVCLFLLLEVGLGQNQISEIKVGVVLDLNTTFSKICLTSINLALSDFYKDHPNYRTRLALHVRDSMKDTVQASAAALDLIQNEQVSAIIGPIDSMQAKFMIKLANKTQVPTISFSATSPLLTSIKSDYFVRGTIDDSYQVKAIAAIFESFGWRSVVAIYVDNELGEGIMPYLFDALQDVQVDRSVIPSEANDDQILKELYKLMTRQTRVFVVHMASRLASRIFEKATEIGMMEEGYVWLMTNGMTHMMRHIHHGRSLNTIDGVLGVRSHVPKSKGLEDFRLRWKRNFKKENPWLRDDLSIFGLWAYDSTTALAMAVEKTNISSFPYNNASGSSNNMTDLGTLHVSRYGPSLLEALSEIRFNGLAGRFNLIDRQLESPKFEIINFVGNEERIVGFWTPSNGLVNVNSNKTTSFTGERFGPLIWPGKSTIVPKGWEIPTNGKKIKVGVPVKKGFFNFVEVITDPITNITTPKGYAIDIFEAALKKLPYSVIPQYYRFESPDDDYDDLVYKVDNGTLDAVVGDVTITAYRSLYADFTLPYTESGVSMMVPVRDNENKNTWVFLKPWGLDLWVTTACFFVLIGFVVWLFEHRVNTDFRGPPHHQIGTSFWFSFSTMVFAHREKVVSNLARFVVVVWCFVVLVLTQSYTANLTSFLTVQRFQPAAINVKDLIKNGDYVGYQHGAFVKDFLIKEGFNVSKLKPFGSSEECHALLSNGSISAAFDEVAYLRAILSQYCSKYAIVEPTFKTAGFGFAFPRNSPLTGDVSKAILNVTQGDEMQHIENKWFMKQNDCPDPKTALSSNRLSLRSFWGLFLIAGIASFLALLIFVFLFLYENRHTLCDDSEDSIWRKLTSLFRNFDEKDIKSHTFKSSAVHHVSSPMTQYIPSPSTLQIAPRPHSPSQDRAFELRRVSFTPNEERLTTQTIHFEDEESDIECVVEQ.

An N-terminal signal peptide occupies residues 1 to 26; the sequence is MNPKKNNNTFLSYFVCLFLLLEVGLG. The Extracellular portion of the chain corresponds to 27–577; it reads QNQISEIKVG…NTWVFLKPWG (551 aa). N-linked (GlcNAc...) asparagine glycans are attached at residues Asn-42, Asn-118, Asn-333, Asn-341, Asn-348, Asn-420, Asn-478, and Asn-524. The chain crosses the membrane as a helical span at residues 578-598; sequence LDLWVTTACFFVLIGFVVWLF. Topologically, residues 599-607 are cytoplasmic; the sequence is EHRVNTDFR. Residues 608–628 traverse the membrane as a helical segment; sequence GPPHHQIGTSFWFSFSTMVFA. Residues 629–632 lie on the Cytoplasmic side of the membrane; it reads HREK. A helical membrane pass occupies residues 633 to 653; sequence VVSNLARFVVVVWCFVVLVLT. The Extracellular segment spans residues 654–819; it reads QSYTANLTSF…NRLSLRSFWG (166 aa). 4 N-linked (GlcNAc...) asparagine glycosylation sites follow: Asn-659, Asn-704, Asn-723, and Asn-779. Residues 820-840 traverse the membrane as a helical segment; the sequence is LFLIAGIASFLALLIFVFLFL. Over 841 to 947 the chain is Cytoplasmic; that stretch reads YENRHTLCDD…ESDIECVVEQ (107 aa).

Belongs to the glutamate-gated ion channel (TC 1.A.10.1) family. May form heteromers. Expressed predominantly in leaves.

It localises to the membrane. Glutamate-gated receptor that probably acts as a non-selective cation channel. May be involved in light-signal transduction and calcium homeostasis via the regulation of calcium influx into cells. This chain is Glutamate receptor 2.8 (GLR2.8), found in Arabidopsis thaliana (Mouse-ear cress).